The primary structure comprises 313 residues: Desiccation-related protein PCC13-62 (313 aa).

The first 26 residues, 1-26 (MAQQPTFASAALVSFFLALICSCSYA), serve as a signal peptide directing secretion.

This chain is Desiccation-related protein PCC13-62, found in Craterostigma plantagineum (Blue gem).